Here is a 725-residue protein sequence, read N- to C-terminus: N-alpha-acetyltransferase 35, NatC auxiliary subunit (725 aa).

The tract at residues 548-573 is disordered; the sequence is ERIMEEQQKGRSSKKTKKKKKVRPLS. The segment covering 558 to 571 has biased composition (basic residues); that stretch reads RSSKKTKKKKKVRP.

Belongs to the MAK10 family. In terms of assembly, component of the N-terminal acetyltransferase C (NatC) complex.

It localises to the cytoplasm. In terms of biological role, auxillary component of the N-terminal acetyltransferase C (NatC) complex which catalyzes acetylation of N-terminal methionine residues. N-terminal acetylation protects proteins from ubiquitination and degradation by the N-end rule pathway. This is N-alpha-acetyltransferase 35, NatC auxiliary subunit (NAA35) from Gallus gallus (Chicken).